A 297-amino-acid chain; its full sequence is uncharacterized protein (297 aa).

3 disordered regions span residues 1–20, 39–100, and 174–297; these read MDTL…NADV, IEKD…ENLG, and VQKA…NEDQ. An RRM domain is found at 101–179; that stretch reads NDLFVSGIAS…RVLNVQKAKR (79 aa). Ser184 carries the post-translational modification Phosphoserine. Basic and acidic residues-rich tracts occupy residues 209–223 and 233–253; these read GGYR…DSNR and PQRE…DSRP. A compositionally biased stretch (basic residues) spans 254-263; sequence RRERHFHGRS. Polar residues predominate over residues 287–297; sequence SHSSVPPNEDQ.

It localises to the nucleus. This is an uncharacterized protein from Schizosaccharomyces pombe (strain 972 / ATCC 24843) (Fission yeast).